The chain runs to 76 residues: RNA-binding protein KhpA (76 aa).

A KH domain is found at 29–76; the sequence is SLTYKLSVSKEDMGRVIGKQGRIAKAIRTLVYAVGSKNDKKIRLEIIE.

The protein belongs to the KhpA RNA-binding protein family. Forms a complex with KhpB.

The protein resides in the cytoplasm. Its function is as follows. A probable RNA chaperone. Forms a complex with KhpB which binds to cellular RNA and controls its expression. Plays a role in peptidoglycan (PG) homeostasis and cell length regulation. The sequence is that of RNA-binding protein KhpA from Listeria innocua serovar 6a (strain ATCC BAA-680 / CLIP 11262).